We begin with the raw amino-acid sequence, 448 residues long: Potassium/proton antiporter CemA (448 aa).

Helical transmembrane passes span 47-67, 213-233, 314-334, and 395-415; these read IVFYTNTGLNNCIFKIYLSLL, LSSLQYIGCLISIPSIISTLF, IISHSLTDIIYLITLSGLFVA, and IISCSVSTFPVVLDTVLKYLI.

It belongs to the CemA family.

Its subcellular location is the plastid membrane. It catalyses the reaction K(+)(in) + H(+)(out) = K(+)(out) + H(+)(in). In terms of biological role, may be involved in proton extrusion. The sequence is that of Potassium/proton antiporter CemA from Aneura mirabilis (Parasitic liverwort).